The chain runs to 145 residues: 3-hydroxyacyl-[acyl-carrier-protein] dehydratase FabZ (145 aa).

His48 is a catalytic residue.

Belongs to the thioester dehydratase family. FabZ subfamily.

Its subcellular location is the cytoplasm. The enzyme catalyses a (3R)-hydroxyacyl-[ACP] = a (2E)-enoyl-[ACP] + H2O. Its function is as follows. Involved in unsaturated fatty acids biosynthesis. Catalyzes the dehydration of short chain beta-hydroxyacyl-ACPs and long chain saturated and unsaturated beta-hydroxyacyl-ACPs. The protein is 3-hydroxyacyl-[acyl-carrier-protein] dehydratase FabZ of Campylobacter hominis (strain ATCC BAA-381 / DSM 21671 / CCUG 45161 / LMG 19568 / NCTC 13146 / CH001A).